Reading from the N-terminus, the 504-residue chain is Galactose/methyl galactoside import ATP-binding protein MglA (504 aa).

2 ABC transporter domains span residues 8-247 (LEMN…VGRD) and 258-504 (TPGE…TRFI). 40–47 (GENGAGKS) provides a ligand contact to ATP.

Belongs to the ABC transporter superfamily. Galactose/methyl galactoside importer (TC 3.A.1.2.3) family. The complex is composed of one ATP-binding protein (MglA), two transmembrane proteins (MglC) and a solute-binding protein (MglB).

Its subcellular location is the cell membrane. The enzyme catalyses D-galactose(out) + ATP + H2O = D-galactose(in) + ADP + phosphate + H(+). It carries out the reaction methyl beta-D-galactoside(out) + ATP + H2O = methyl beta-D-galactoside(in) + ADP + phosphate + H(+). Its function is as follows. Part of the ABC transporter complex MglABC involved in galactose/methyl galactoside import. Responsible for energy coupling to the transport system. The protein is Galactose/methyl galactoside import ATP-binding protein MglA of Clostridium tetani (strain Massachusetts / E88).